A 399-amino-acid chain; its full sequence is Acetylornithine aminotransferase (399 aa).

Residues 97–98 (GA) and Phe-130 each bind pyridoxal 5'-phosphate. A N(2)-acetyl-L-ornithine-binding site is contributed by Arg-133. Residue 215–218 (DEVQ) participates in pyridoxal 5'-phosphate binding. Lys-244 bears the N6-(pyridoxal phosphate)lysine mark. Thr-272 provides a ligand contact to N(2)-acetyl-L-ornithine. A pyridoxal 5'-phosphate-binding site is contributed by Thr-273.

It belongs to the class-III pyridoxal-phosphate-dependent aminotransferase family. ArgD subfamily. In terms of assembly, homodimer. It depends on pyridoxal 5'-phosphate as a cofactor.

The protein localises to the cytoplasm. It carries out the reaction N(2)-acetyl-L-ornithine + 2-oxoglutarate = N-acetyl-L-glutamate 5-semialdehyde + L-glutamate. It functions in the pathway amino-acid biosynthesis; L-arginine biosynthesis; N(2)-acetyl-L-ornithine from L-glutamate: step 4/4. The sequence is that of Acetylornithine aminotransferase from Mesorhizobium japonicum (strain LMG 29417 / CECT 9101 / MAFF 303099) (Mesorhizobium loti (strain MAFF 303099)).